The primary structure comprises 63 residues: Sec-independent protein translocase protein TatA (63 aa).

Residues 1–21 (MGSFSMWHWLIVLVIVLLLFG) form a helical membrane-spanning segment. The disordered stretch occupies residues 42–63 (GMTDEDAPDTAKTVDHKADETK). The segment covering 53–63 (KTVDHKADETK) has biased composition (basic and acidic residues).

Belongs to the TatA/E family. In terms of assembly, the Tat system comprises two distinct complexes: a TatABC complex, containing multiple copies of TatA, TatB and TatC subunits, and a separate TatA complex, containing only TatA subunits. Substrates initially bind to the TatABC complex, which probably triggers association of the separate TatA complex to form the active translocon.

It is found in the cell inner membrane. Part of the twin-arginine translocation (Tat) system that transports large folded proteins containing a characteristic twin-arginine motif in their signal peptide across membranes. TatA could form the protein-conducting channel of the Tat system. This is Sec-independent protein translocase protein TatA from Rhizobium leguminosarum bv. trifolii (strain WSM2304).